The primary structure comprises 180 residues: ATP synthase subunit delta (180 aa).

This sequence belongs to the ATPase delta chain family. F-type ATPases have 2 components, F(1) - the catalytic core - and F(0) - the membrane proton channel. F(1) has five subunits: alpha(3), beta(3), gamma(1), delta(1), epsilon(1). F(0) has three main subunits: a(1), b(2) and c(10-14). The alpha and beta chains form an alternating ring which encloses part of the gamma chain. F(1) is attached to F(0) by a central stalk formed by the gamma and epsilon chains, while a peripheral stalk is formed by the delta and b chains.

The protein localises to the cell membrane. Its function is as follows. F(1)F(0) ATP synthase produces ATP from ADP in the presence of a proton or sodium gradient. F-type ATPases consist of two structural domains, F(1) containing the extramembraneous catalytic core and F(0) containing the membrane proton channel, linked together by a central stalk and a peripheral stalk. During catalysis, ATP synthesis in the catalytic domain of F(1) is coupled via a rotary mechanism of the central stalk subunits to proton translocation. This protein is part of the stalk that links CF(0) to CF(1). It either transmits conformational changes from CF(0) to CF(1) or is implicated in proton conduction. The sequence is that of ATP synthase subunit delta from Lactobacillus delbrueckii subsp. bulgaricus (strain ATCC 11842 / DSM 20081 / BCRC 10696 / JCM 1002 / NBRC 13953 / NCIMB 11778 / NCTC 12712 / WDCM 00102 / Lb 14).